A 155-amino-acid polypeptide reads, in one-letter code: MARKKIVSGHLKNAISKDEHISVKFVNCIMRDGKKSVAEKVFKDAMELVEEKLGESSLKVFEKAIGNIRPSVEVKSRRVGGSTYQVPTEIKSSRQTALAFRWLLRFSRSRSEKGLSNKLAAELLDAYNERGGAVKKKEDTHKMAEANKAFAHFRW.

This sequence belongs to the universal ribosomal protein uS7 family. As to quaternary structure, part of the 30S ribosomal subunit. Contacts proteins S9 and S11.

In terms of biological role, one of the primary rRNA binding proteins, it binds directly to 16S rRNA where it nucleates assembly of the head domain of the 30S subunit. Is located at the subunit interface close to the decoding center, probably blocks exit of the E-site tRNA. The polypeptide is Small ribosomal subunit protein uS7 (Desulforapulum autotrophicum (strain ATCC 43914 / DSM 3382 / VKM B-1955 / HRM2) (Desulfobacterium autotrophicum)).